Consider the following 725-residue polypeptide: MIYQGENLSVDYIEPGIAHLVFNAKGSVNKLNLATLQSVGEAIDALYSQKDLQGLLLSSDKSAFIVGADITEFLGLFDIPTEELSDWLHQANAIFNRLEDIPVPTLSAITGFALGGGCECVLATDFRLADETASIGLPETQLGIMPGWGGSVRLPRLIGADPAMEVITTGKPKRAKDALALGMIDGVVSRETLITDSVTMLKKAIGGQLDWQSRRTQKKAPLKLSPLEAAMSFNVAKGMIMKMAGKHYPAPMTAVKSIENSAFMDRDAALEVENKNFVALTQTDVAKSLVGIFLNDQLVKSKAKQAIKNSEPVTSAAVLGAGIMGGGIAYQSASKGVPVLMKDIAQQSLDLGMNEASKLLNKQLERGRLSGLKMAQVLSSITPSLNYASIENKDIVVEAVVENPKIKAAVLAEVENEVNEHAILASNTSTIPISLLAKSLKRPENFCGMHFFNPVHRMPLVEVIRGEKTSQQTIDRVVAYASQMGKTPIVVNDCPGFFVNRVLFPYFAGFSLLLRDGGDYQQIDKVMEKEFGWPMGPAYLLDVVGIDTAHHAQAVMAQGFPERMAKNGRDVIDAMFESDRYGQKNGSGFYAYSIDRKGKPKKNIDESTAGIIATVTNTTQPYTSEQISARMMIPMINEVIRCLDEGIIASPAEADMALVYGLGFPPFKGGVFRYLDAIGLTTYLDMAKEFEHLGAVYQVPESIKQKAADGECYYPAPQSLSAPSA.

The segment at 1-189 (MIYQGENLSV…ALGMIDGVVS (189 aa)) is enoyl-CoA hydratase/isomerase. Asp-296 contacts substrate. Residues 311–725 (EPVTSAAVLG…APQSLSAPSA (415 aa)) are 3-hydroxyacyl-CoA dehydrogenase. NAD(+) contacts are provided by residues Met-324, Asp-343, 400–402 (VVE), Lys-407, and Ser-429. His-450 functions as the For 3-hydroxyacyl-CoA dehydrogenase activity in the catalytic mechanism. Asn-453 lines the NAD(+) pocket. Substrate is bound by residues Asn-500 and Tyr-660.

This sequence in the N-terminal section; belongs to the enoyl-CoA hydratase/isomerase family. It in the C-terminal section; belongs to the 3-hydroxyacyl-CoA dehydrogenase family. Heterotetramer of two alpha chains (FadB) and two beta chains (FadA).

It catalyses the reaction a (3S)-3-hydroxyacyl-CoA + NAD(+) = a 3-oxoacyl-CoA + NADH + H(+). The catalysed reaction is a (3S)-3-hydroxyacyl-CoA = a (2E)-enoyl-CoA + H2O. The enzyme catalyses a 4-saturated-(3S)-3-hydroxyacyl-CoA = a (3E)-enoyl-CoA + H2O. It carries out the reaction (3S)-3-hydroxybutanoyl-CoA = (3R)-3-hydroxybutanoyl-CoA. It catalyses the reaction a (3Z)-enoyl-CoA = a 4-saturated (2E)-enoyl-CoA. The catalysed reaction is a (3E)-enoyl-CoA = a 4-saturated (2E)-enoyl-CoA. The protein operates within lipid metabolism; fatty acid beta-oxidation. Involved in the aerobic and anaerobic degradation of long-chain fatty acids via beta-oxidation cycle. Catalyzes the formation of 3-oxoacyl-CoA from enoyl-CoA via L-3-hydroxyacyl-CoA. It can also use D-3-hydroxyacyl-CoA and cis-3-enoyl-CoA as substrate. This Aliivibrio fischeri (strain MJ11) (Vibrio fischeri) protein is Fatty acid oxidation complex subunit alpha.